The chain runs to 413 residues: Tryptophan synthase beta chain 2 (413 aa).

Position 107 is an N6-(pyridoxal phosphate)lysine (lysine 107).

It belongs to the TrpB family. As to quaternary structure, tetramer of two alpha and two beta chains. The cofactor is pyridoxal 5'-phosphate.

The catalysed reaction is (1S,2R)-1-C-(indol-3-yl)glycerol 3-phosphate + L-serine = D-glyceraldehyde 3-phosphate + L-tryptophan + H2O. It participates in amino-acid biosynthesis; L-tryptophan biosynthesis; L-tryptophan from chorismate: step 5/5. In terms of biological role, the beta subunit is responsible for the synthesis of L-tryptophan from indole and L-serine. The chain is Tryptophan synthase beta chain 2 (trpB2) from Nostoc sp. (strain PCC 7120 / SAG 25.82 / UTEX 2576).